Consider the following 368-residue polypeptide: D-alanine--D-alanine ligase (368 aa).

The ATP-grasp domain maps to 145 to 348 (KRLLQGAGLH…YQDLITTLIE (204 aa)). Residue 175 to 230 (ADQLGLPLFIKPANQGSSVGVNKATTEAEFTAAIEEAFSYDHKVLIEAAIKGREIE) participates in ATP binding. 3 residues coordinate Mg(2+): Asp-302, Glu-315, and Asn-317.

This sequence belongs to the D-alanine--D-alanine ligase family. The cofactor is Mg(2+). Mn(2+) is required as a cofactor.

The protein resides in the cytoplasm. It carries out the reaction 2 D-alanine + ATP = D-alanyl-D-alanine + ADP + phosphate + H(+). Its pathway is cell wall biogenesis; peptidoglycan biosynthesis. In terms of biological role, cell wall formation. This chain is D-alanine--D-alanine ligase, found in Shouchella clausii (strain KSM-K16) (Alkalihalobacillus clausii).